A 196-amino-acid polypeptide reads, in one-letter code: Holliday junction branch migration complex subunit RuvA (196 aa).

Residues 1 to 63 (MIASVRGEVL…EDSMTLYGFP (63 aa)) form a domain I region. The domain II stretch occupies residues 64 to 138 (DGETRDLFLT…DKVGVAATGG (75 aa)). Positions 138 to 142 (GALST) are flexible linker. Residues 143-196 (NGHAVRSPVVEALVGLGFAAKQAEEATDTVLAANHDATTSSALRSALSLLGKAR) are domain III.

It belongs to the RuvA family. Homotetramer. Forms an RuvA(8)-RuvB(12)-Holliday junction (HJ) complex. HJ DNA is sandwiched between 2 RuvA tetramers; dsDNA enters through RuvA and exits via RuvB. An RuvB hexamer assembles on each DNA strand where it exits the tetramer. Each RuvB hexamer is contacted by two RuvA subunits (via domain III) on 2 adjacent RuvB subunits; this complex drives branch migration. In the full resolvosome a probable DNA-RuvA(4)-RuvB(12)-RuvC(2) complex forms which resolves the HJ.

Its subcellular location is the cytoplasm. Functionally, the RuvA-RuvB-RuvC complex processes Holliday junction (HJ) DNA during genetic recombination and DNA repair, while the RuvA-RuvB complex plays an important role in the rescue of blocked DNA replication forks via replication fork reversal (RFR). RuvA specifically binds to HJ cruciform DNA, conferring on it an open structure. The RuvB hexamer acts as an ATP-dependent pump, pulling dsDNA into and through the RuvAB complex. HJ branch migration allows RuvC to scan DNA until it finds its consensus sequence, where it cleaves and resolves the cruciform DNA. This is Holliday junction branch migration complex subunit RuvA from Mycobacterium bovis (strain ATCC BAA-935 / AF2122/97).